Reading from the N-terminus, the 20-residue chain is Cytochrome c oxidase subunit 7B-liver, mitochondrial (20 aa).

This sequence belongs to the cytochrome c oxidase VIIb family. As to quaternary structure, component of the cytochrome c oxidase (complex IV, CIV), a multisubunit enzyme composed of 14 subunits. The complex is composed of a catalytic core of 3 subunits MT-CO1, MT-CO2 and MT-CO3, encoded in the mitochondrial DNA, and 11 supernumerary subunits COX4I, COX5A, COX5B, COX6A, COX6B, COX6C, COX7A, COX7B, COX7C, COX8 and NDUFA4, which are encoded in the nuclear genome. The complex exists as a monomer or a dimer and forms supercomplexes (SCs) in the inner mitochondrial membrane with NADH-ubiquinone oxidoreductase (complex I, CI) and ubiquinol-cytochrome c oxidoreductase (cytochrome b-c1 complex, complex III, CIII), resulting in different assemblies (supercomplex SCI(1)III(2)IV(1) and megacomplex MCI(2)III(2)IV(2)).

The protein resides in the mitochondrion inner membrane. It catalyses the reaction 4 Fe(II)-[cytochrome c] + O2 + 8 H(+)(in) = 4 Fe(III)-[cytochrome c] + 2 H2O + 4 H(+)(out). It participates in energy metabolism; oxidative phosphorylation. Functionally, component of the cytochrome c oxidase, the last enzyme in the mitochondrial electron transport chain which drives oxidative phosphorylation. The respiratory chain contains 3 multisubunit complexes succinate dehydrogenase (complex II, CII), ubiquinol-cytochrome c oxidoreductase (cytochrome b-c1 complex, complex III, CIII) and cytochrome c oxidase (complex IV, CIV), that cooperate to transfer electrons derived from NADH and succinate to molecular oxygen, creating an electrochemical gradient over the inner membrane that drives transmembrane transport and the ATP synthase. Cytochrome c oxidase is the component of the respiratory chain that catalyzes the reduction of oxygen to water. Electrons originating from reduced cytochrome c in the intermembrane space (IMS) are transferred via the dinuclear copper A center (CU(A)) of subunit 2 and heme A of subunit 1 to the active site in subunit 1, a binuclear center (BNC) formed by heme A3 and copper B (CU(B)). The BNC reduces molecular oxygen to 2 water molecules using 4 electrons from cytochrome c in the IMS and 4 protons from the mitochondrial matrix. The chain is Cytochrome c oxidase subunit 7B-liver, mitochondrial from Thunnus obesus (Bigeye tuna).